The primary structure comprises 174 residues: Small ribosomal subunit protein uS5 (174 aa).

Residues 16 to 79 (FSELIVSVRR…NAAKKNMIRV (64 aa)) form the S5 DRBM domain.

The protein belongs to the universal ribosomal protein uS5 family. As to quaternary structure, part of the 30S ribosomal subunit. Contacts proteins S4 and S8.

With S4 and S12 plays an important role in translational accuracy. In terms of biological role, located at the back of the 30S subunit body where it stabilizes the conformation of the head with respect to the body. This chain is Small ribosomal subunit protein uS5, found in Ehrlichia canis (strain Jake).